A 235-amino-acid chain; its full sequence is NAD(P)H-quinone oxidoreductase subunit K (235 aa).

[4Fe-4S] cluster is bound by residues Cys52, Cys53, Cys117, and Cys148. A compositionally biased stretch (low complexity) spans 216 to 226 (AGAAVAPQLPV). Residues 216-235 (AGAAVAPQLPVTEKEGRDRA) are disordered.

It belongs to the complex I 20 kDa subunit family. As to quaternary structure, NDH-1 can be composed of about 15 different subunits; different subcomplexes with different compositions have been identified which probably have different functions. The cofactor is [4Fe-4S] cluster.

It localises to the cellular thylakoid membrane. It carries out the reaction a plastoquinone + NADH + (n+1) H(+)(in) = a plastoquinol + NAD(+) + n H(+)(out). It catalyses the reaction a plastoquinone + NADPH + (n+1) H(+)(in) = a plastoquinol + NADP(+) + n H(+)(out). In terms of biological role, NDH-1 shuttles electrons from an unknown electron donor, via FMN and iron-sulfur (Fe-S) centers, to quinones in the respiratory and/or the photosynthetic chain. The immediate electron acceptor for the enzyme in this species is believed to be plastoquinone. Couples the redox reaction to proton translocation, and thus conserves the redox energy in a proton gradient. Cyanobacterial NDH-1 also plays a role in inorganic carbon-concentration. In Synechococcus elongatus (strain ATCC 33912 / PCC 7942 / FACHB-805) (Anacystis nidulans R2), this protein is NAD(P)H-quinone oxidoreductase subunit K.